An 88-amino-acid polypeptide reads, in one-letter code: ATP synthase epsilon chain (88 aa).

The protein belongs to the ATPase epsilon chain family. In terms of assembly, F-type ATPases have 2 components, CF(1) - the catalytic core - and CF(0) - the membrane proton channel. CF(1) has five subunits: alpha(3), beta(3), gamma(1), delta(1), epsilon(1). CF(0) has three main subunits: a, b and c.

Its subcellular location is the cell inner membrane. Functionally, produces ATP from ADP in the presence of a proton gradient across the membrane. This is ATP synthase epsilon chain (atpC) from Chlorobium limicola.